The chain runs to 150 residues: UPF0540 protein At1g62080 (150 aa).

A signal peptide spans 1 to 21 (MNATKFLVLLVIGVLCAIVTA). A compositionally biased stretch (low complexity) spans 119–135 (AAAARAKGKVASASRVK). The segment at 119–150 (AAAARAKGKVASASRVKGSSEKKKKDRKGKKD) is disordered.

Belongs to the UPF0540 family.

In Arabidopsis thaliana (Mouse-ear cress), this protein is UPF0540 protein At1g62080.